We begin with the raw amino-acid sequence, 249 residues long: MHALGRTPALTLLIFIYNFVSVYTIVSVQMGTKARLCCRSIPLTKAVLITWIIKPRGQPSCIMAYKVETKETNETCLGRNITWASTPDHIPDLQISAVALQHEGNYLCEITTPEGNFHKVYDLQVLVPPEVTYFLGENRTAVCEAMAGKPAAQISWTPDGDCVTKSESHSNGTVTVRSTCHWEQNNVSAVSCIVSHSTGNQSLSIELSRGTTSTTPSLLTILYVKMVLLGIILLKVGFAFFQKRNVTRT.

The signal sequence occupies residues 1–24 (MHALGRTPALTLLIFIYNFVSVYT). Positions 25–124 (IVSVQMGTKA…GNFHKVYDLQ (100 aa)) constitute an Ig-like V-type domain. The Extracellular segment spans residues 25–220 (IVSVQMGTKA…TTSTTPSLLT (196 aa)). A disulfide bond links cysteine 38 and cysteine 108. N-linked (GlcNAc...) asparagine glycans are attached at residues asparagine 73, asparagine 138, and asparagine 171. Residues 113 to 208 (PEGNFHKVYD…GNQSLSIELS (96 aa)) form the Ig-like C2-type domain. An intrachain disulfide couples cysteine 143 to cysteine 192. Residues 221-241 (ILYVKMVLLGIILLKVGFAFF) traverse the membrane as a helical segment. The Cytoplasmic portion of the chain corresponds to 242–249 (QKRNVTRT).

This sequence belongs to the CD200R family. Expressed in bone marrow, spleen, brain, lung, testis and thymus.

The protein localises to the membrane. Its function is as follows. According to PubMed:15187158 it is a receptor for the CD200 cell surface glycoprotein. According to PubMed:16081818 it is not a receptor for the CD200/OX2 cell surface glycoprotein. Involved in the recruitment or surface expression of the TYROBP receptor. The protein is Cell surface glycoprotein CD200 receptor 2 (Cd200r1l) of Mus musculus (Mouse).